Reading from the N-terminus, the 36-residue chain is Potassium channel toxin alpha-KTx 16.9 (36 aa).

Intrachain disulfides connect Cys7/Cys28, Cys13/Cys33, and Cys17/Cys35.

The protein belongs to the short scorpion toxin superfamily. Potassium channel inhibitor family. Alpha-KTx 16 subfamily. In terms of tissue distribution, expressed by the venom gland.

Its subcellular location is the secreted. Its function is as follows. Poorly competes with (125)I-kaliotoxin binding on rat brain synaptosome (IC(50)&gt;100 nM). Is a poor Kv1.3/KCNA3 ligand. May have as real target KCa1.1/KCNMA1 channel. Shows weak toxicity on mice. In Buthus paris (Scorpion), this protein is Potassium channel toxin alpha-KTx 16.9.